We begin with the raw amino-acid sequence, 250 residues long: Aquaporin TIP2-1 (250 aa).

Met1 carries the post-translational modification N-acetylmethionine. Topologically, residues 1–20 (MAGVAFGSFDDSFSLASLRA) are cytoplasmic. N-acetylalanine; in Aquaporin TIP2-1, N-terminally processed is present on Ala2. Residues 21–41 (YLAEFISTLLFVFAGVGSAIA) form a helical membrane-spanning segment. Topologically, residues 42–54 (YAKLTSDAALDTP) are vacuolar. A helical transmembrane segment spans residues 55 to 75 (GLVAIAVCHGFALFVAVAIGA). Topologically, residues 76–98 (NISGGHVNPAVTFGLAVGGQITV) are cytoplasmic. The short motif at 83 to 85 (NPA) is the NPA 1 element. The helical transmembrane segment at 99–119 (ITGVFYWIAQLLGSTAACFLL) threads the bilayer. The Vacuolar segment spans residues 120 to 141 (KYVTGGLAVPTHSVAAGLGSIE). Residues 142-162 (GVVMEIIITFALVYTVYATAA) traverse the membrane as a helical segment. Residues 163 to 168 (DPKKGS) are Cytoplasmic-facing. A helical membrane pass occupies residues 169 to 189 (LGTIAPLAIGLIVGANILAAG). Topologically, residues 190–215 (PFSGGSMNPARSFGPAVAAGDFSGHW) are vacuolar. The NPA 2 signature appears at 197–199 (NPA). The chain crosses the membrane as a helical span at residues 216 to 236 (VYWVGPLIGGGLAGLIYGNVF). Over 237-250 (MGSSEHVPLASADF) the chain is Cytoplasmic.

The protein belongs to the MIP/aquaporin (TC 1.A.8) family. TIP (TC 1.A.8.10) subfamily. As to quaternary structure, interacts with cucumber mosaic virus (CMV) Protein 1a. As to expression, strongly expressed in shoot, rosette, bolt and flowers. Also expressed in roots, flower buds and above ground.

The protein localises to the vacuole membrane. Aquaporin required to facilitate the transport of water from the vacuolar compartment to the cytoplasm. Does not promote glycerol permeability. Its function is impaired by Hg(2+). Transports urea in yeast cells and Xenopus laevis oocytes in a pH-independent manner. Transports methylammonium or ammonium in yeast cells and Xenopus laevis oocytes, preferentially at high medium pH. May participate in vacuolar compartmentation and detoxification of ammonium. This is Aquaporin TIP2-1 (TIP2-1) from Arabidopsis thaliana (Mouse-ear cress).